Here is a 237-residue protein sequence, read N- to C-terminus: Ribosomal RNA small subunit methyltransferase G (237 aa).

Residues glycine 79, 130–131 (CE), and arginine 147 contribute to the S-adenosyl-L-methionine site.

It belongs to the methyltransferase superfamily. RNA methyltransferase RsmG family.

The protein resides in the cytoplasm. Its function is as follows. Specifically methylates the N7 position of a guanine in 16S rRNA. In Malacoplasma penetrans (strain HF-2) (Mycoplasma penetrans), this protein is Ribosomal RNA small subunit methyltransferase G.